We begin with the raw amino-acid sequence, 654 residues long: Macrolide export ATP-binding/permease protein MacB (654 aa).

Positions 6–244 (LKVEDLTRRF…EQAAKTPSAS (239 aa)) constitute an ABC transporter domain. ATP is bound at residue 42-49 (GASGSGKS). 4 consecutive transmembrane segments (helical) span residues 280 to 300 (FLTMLGIIIGIASVVSVVALG), 529 to 549 (LLISAIAVISLIVGGIGVMNI), 584 to 604 (LVCLCGGIAGIGLAFLIGFAF), and 619 to 639 (SIIWAFICSTLIGIAFGFLPA).

This sequence belongs to the ABC transporter superfamily. Macrolide exporter (TC 3.A.1.122) family. Homodimer. Part of the tripartite efflux system MacAB-TolC, which is composed of an inner membrane transporter, MacB, a periplasmic membrane fusion protein, MacA, and an outer membrane component, TolC. The complex forms a large protein conduit and can translocate molecules across both the inner and outer membranes. Interacts with MacA.

Its subcellular location is the cell inner membrane. Part of the tripartite efflux system MacAB-TolC. MacB is a non-canonical ABC transporter that contains transmembrane domains (TMD), which form a pore in the inner membrane, and an ATP-binding domain (NBD), which is responsible for energy generation. Confers resistance against macrolides. This chain is Macrolide export ATP-binding/permease protein MacB, found in Vibrio parahaemolyticus serotype O3:K6 (strain RIMD 2210633).